The sequence spans 348 residues: LRP2-binding protein (348 aa).

A TPR repeat occupies 60-93 (TLAYFLRGQLYFEEGWYEEALEQFEEIEEKDHQA). Sel1-like repeat units lie at residues 94-126 (TYQL…DSPC), 134-169 (FAAA…DNGN), 174-207 (VKAQ…GNGN), 208-243 (LESQ…ERGN), 244-278 (VYAQ…EVHD), and 298-333 (AMAS…RLNP).

In terms of assembly, interacts with LRP2.

It is found in the cytoplasm. Functionally, may act as an adapter that regulates LRP2 function. The polypeptide is LRP2-binding protein (LRP2BP) (Macaca fascicularis (Crab-eating macaque)).